The primary structure comprises 173 residues: Lipoprotein signal peptidase (173 aa).

3 consecutive transmembrane segments (helical) span residues 11–31 (FGLIFAAVAFLLDQVTKWIVT), 69–89 (TTRWTLVAVTGIVAAAVAFWM), and 93–113 (QAKGDVIALALILGGALGNIV). Catalysis depends on residues aspartate 123 and aspartate 142. Residues 134–154 (PFMIFNVADACITIGVLLLVA) traverse the membrane as a helical segment.

This sequence belongs to the peptidase A8 family.

It localises to the cell inner membrane. It catalyses the reaction Release of signal peptides from bacterial membrane prolipoproteins. Hydrolyzes -Xaa-Yaa-Zaa-|-(S,diacylglyceryl)Cys-, in which Xaa is hydrophobic (preferably Leu), and Yaa (Ala or Ser) and Zaa (Gly or Ala) have small, neutral side chains.. It participates in protein modification; lipoprotein biosynthesis (signal peptide cleavage). Its function is as follows. This protein specifically catalyzes the removal of signal peptides from prolipoproteins. The chain is Lipoprotein signal peptidase from Sphingopyxis alaskensis (strain DSM 13593 / LMG 18877 / RB2256) (Sphingomonas alaskensis).